Reading from the N-terminus, the 533-residue chain is Tyrosinase (533 aa).

A signal peptide spans 1–18; sequence MFLAVLYCLLWSFQISDG. Over 19 to 476 the chain is Lumenal, melanosome; that stretch reads HFPRACASSK…YLEQASRIWP (458 aa). Residues Asn86, Asn111, and Asn161 are each glycosylated (N-linked (GlcNAc...) asparagine). Residues His180, His202, and His211 each coordinate Cu cation. N-linked (GlcNAc...) asparagine glycans are attached at residues Asn230 and Asn337. Cu cation-binding residues include His363 and His367. N-linked (GlcNAc...) asparagine glycosylation is present at Asn371. Residue His390 participates in Cu cation binding. The helical transmembrane segment at 477 to 497 threads the bilayer; sequence WLLGAALVGAVIAAALSGLSS. At 498 to 533 the chain is on the cytoplasmic side; sequence RLCLQKKKKKKQPQEERQPLLMDKDDYHSLLYQSHL.

The protein belongs to the tyrosinase family. In terms of assembly, forms an OPN3-dependent complex with DCT in response to blue light in melanocytes. The cofactor is Cu(2+). In terms of processing, glycosylated. Expressed in the skin.

Its subcellular location is the melanosome membrane. The protein localises to the melanosome. The catalysed reaction is 2 L-dopa + O2 = 2 L-dopaquinone + 2 H2O. It carries out the reaction L-tyrosine + O2 = L-dopaquinone + H2O. The enzyme catalyses 2 5,6-dihydroxyindole-2-carboxylate + O2 = 2 indole-5,6-quinone-2-carboxylate + 2 H2O. Functionally, this is a copper-containing oxidase that functions in the formation of pigments such as melanins and other polyphenolic compounds. Catalyzes the initial and rate limiting step in the cascade of reactions leading to melanin production from tyrosine. In addition to hydroxylating tyrosine to DOPA (3,4-dihydroxyphenylalanine), also catalyzes the oxidation of DOPA to DOPA-quinone, and possibly the oxidation of DHI (5,6-dihydroxyindole) to indole-5,6 quinone. The sequence is that of Tyrosinase (Tyr) from Mus musculus (Mouse).